The sequence spans 81 residues: Bacteriochlorophyll c-binding protein (81 aa).

An a bacteriochlorophyll c-binding site is contributed by H25.

Belongs to the BChl C/E-binding protein family.

It localises to the chlorosome. It is found in the chlorosome envelope. Its function is as follows. Component of the photosynthetic apparatus. The light harvesting B740 complex binds bacteriochlorophyll c. The chain is Bacteriochlorophyll c-binding protein (csmA) from Prosthecochloris aestuarii (strain DSM 271 / SK 413).